Here is a 388-residue protein sequence, read N- to C-terminus: G2/mitotic-specific cyclin-B (388 aa).

It belongs to the cyclin family. Cyclin AB subfamily. In terms of assembly, interacts with the CDK1 protein kinase to form a serine/threonine kinase holoenzyme complex also known as maturation promoting factor (MPF). The cyclin subunit imparts substrate specificity to the complex.

Its function is as follows. Essential for the control of the cell cycle at the G2/M (mitosis) transition. The polypeptide is G2/mitotic-specific cyclin-B (Marthasterias glacialis (Spiny starfish)).